Consider the following 31-residue polypeptide: Delta-conotoxin-like ErVIA (31 aa).

Residues 1 to 4 constitute a propeptide that is removed on maturation; sequence LNKR. Cystine bridges form between C5–C21, C12–C25, and C20–C29.

This sequence belongs to the conotoxin O1 superfamily. As to expression, expressed by the venom duct.

It is found in the secreted. Its function is as follows. This toxin activates voltage-gated sodium channels. It shifts the voltage-dependence of activation to more hyperpolarized potentials but has only little effect on channel inactivation. It is active on Nav1.3/SCN3A (EC(50)=3.98 nM), Nav1.4/SCN4A (EC(50)=4.99 nM), Nav1.6/SCN8A (EC(50)=1.27 nM) and Nav1.7/SCN9A (EC(50)=2.42 nM) voltage-gated sodium channels. In vivo, it induces nocifensive or pain-like behaviors in mice when injected intraplantarly. This Conus eburneus (Ivory cone) protein is Delta-conotoxin-like ErVIA.